The primary structure comprises 395 residues: Argininosuccinate synthase (395 aa).

ATP contacts are provided by residues 9–17 (AYSGGLDTS) and Ala-37. The L-citrulline site is built by Tyr-87 and Ser-92. Gly-117 lines the ATP pocket. L-aspartate contacts are provided by Thr-119, Asn-123, and Asp-124. Asn-123 contributes to the L-citrulline binding site. Arg-127, Ser-173, Ser-182, Glu-258, and Tyr-270 together coordinate L-citrulline.

Belongs to the argininosuccinate synthase family. Type 1 subfamily. As to quaternary structure, homotetramer.

It is found in the cytoplasm. It carries out the reaction L-citrulline + L-aspartate + ATP = 2-(N(omega)-L-arginino)succinate + AMP + diphosphate + H(+). It participates in amino-acid biosynthesis; L-arginine biosynthesis; L-arginine from L-ornithine and carbamoyl phosphate: step 2/3. In Methanospirillum hungatei JF-1 (strain ATCC 27890 / DSM 864 / NBRC 100397 / JF-1), this protein is Argininosuccinate synthase.